A 235-amino-acid chain; its full sequence is 5'-methylthioadenosine/S-adenosylhomocysteine nucleosidase (235 aa).

The active-site Proton acceptor is E12. Substrate contacts are provided by residues G78, M153, and 174 to 175 (ME). Residue D198 is the Proton donor of the active site.

It belongs to the PNP/UDP phosphorylase family. MtnN subfamily.

The enzyme catalyses S-adenosyl-L-homocysteine + H2O = S-(5-deoxy-D-ribos-5-yl)-L-homocysteine + adenine. The catalysed reaction is S-methyl-5'-thioadenosine + H2O = 5-(methylsulfanyl)-D-ribose + adenine. It carries out the reaction 5'-deoxyadenosine + H2O = 5-deoxy-D-ribose + adenine. It functions in the pathway amino-acid biosynthesis; L-methionine biosynthesis via salvage pathway; S-methyl-5-thio-alpha-D-ribose 1-phosphate from S-methyl-5'-thioadenosine (hydrolase route): step 1/2. Catalyzes the irreversible cleavage of the glycosidic bond in both 5'-methylthioadenosine (MTA) and S-adenosylhomocysteine (SAH/AdoHcy) to adenine and the corresponding thioribose, 5'-methylthioribose and S-ribosylhomocysteine, respectively. Also cleaves 5'-deoxyadenosine, a toxic by-product of radical S-adenosylmethionine (SAM) enzymes, into 5-deoxyribose and adenine. The chain is 5'-methylthioadenosine/S-adenosylhomocysteine nucleosidase from Pseudoalteromonas translucida (strain TAC 125).